We begin with the raw amino-acid sequence, 256 residues long: Homeobox-leucine zipper protein HOX18 (256 aa).

The disordered stretch occupies residues 52-117; sequence YDHGRDEEQA…GGGGGTRKKL (66 aa). Residues 102-112 are compositionally biased toward gly residues; that stretch reads DGGSGSGGGGG. Residues 112–171 constitute a DNA-binding region (homeobox); it reads GTRKKLQLTKEQSTLLEDSFRVHNILSHAQKHELARQLKLKPRQVEVWFQNRRARTKLKQ. Residues 170–214 are leucine-zipper; it reads KQTEVDCEFLKRCCESLTEENKQLKHELMELRRLASAAAAAAGSQ.

The protein belongs to the HD-ZIP homeobox family. Class II subfamily. In terms of tissue distribution, expressed in roots, leaf sheaths and blades and panicles.

The protein localises to the nucleus. Probable transcription factor. The protein is Homeobox-leucine zipper protein HOX18 (HOX18) of Oryza sativa subsp. indica (Rice).